The primary structure comprises 618 residues: Nuclear RNA export factor 1 (618 aa).

Residues 1–15 are compositionally biased toward basic and acidic residues; that stretch reads MADEGKSYNEHDDRV. The interval 1–113 is disordered; it reads MADEGKSYNE…RGGAGTSQDG (113 aa). The residue at position 2 (A2) is an N-acetylalanine. The minor non-specific RNA-binding stretch occupies residues 2–59; the sequence is ADEGKSYNEHDDRVSFPQRRKKGRGPFRWKCGVGNRRSGRGGSGIRSSRFEEDDGDVA. The interval 2-117 is RNA-binding (RBD); the sequence is ADEGKSYNEH…GTSQDGTTKN (116 aa). An interaction with ALYREF/THOC4 and LUZP4 region spans residues 2 to 197; that stretch reads ADEGKSYNEH…IIINSSAPPY (196 aa). The span at 19–28 shows a compositional bias: basic residues; sequence QRRKKGRGPF. R41 bears the Asymmetric dimethylarginine; alternate mark. An Omega-N-methylarginine; alternate modification is found at R41. Positions 60–117 are major non-specific RNA-binding; sequence MNDPQDGPRVRFNPYTTRPNRRRDTWHDRDRIHVTVRRDRAPQERGGAGTSQDGTTKN. Residues 60–117 are RNA binding; sequence MNDPQDGPRVRFNPYTTRPNRRRDTWHDRDRIHVTVRRDRAPQERGGAGTSQDGTTKN. Residues 66 to 99 carry the Nuclear localization signal motif; it reads GPRVRFNPYTTRPNRRRDTWHDRDRIHVTVRRDR. The segment covering 81-102 has biased composition (basic and acidic residues); the sequence is RRDTWHDRDRIHVTVRRDRAPQ. Residues 82-109 carry the Nuclear export signal motif; it reads RDTWHDRDRIHVTVRRDRAPQERGGAGT. The region spanning 118–197 is the RRM domain; that stretch reads WFKITIPYGK…IIINSSAPPY (80 aa). Y125 is modified (3'-nitrotyrosine). LRR repeat units follow at residues 265 to 290, 291 to 314, 315 to 342, and 343 to 370; these read ELLS…QKAP, NLKI…IKGL, KLEE…TIRE, and RFPK…TMLP. An NTF2 domain is found at 385–535; it reads LVLHFLQQYY…LCIVNDELFV (151 aa). The 55-residue stretch at 564–618 folds into the TAP-C domain; sequence QEQQDMLQAFSTQSGMNLEWSQKCLQDNNWDYTRSAQAFTHLKAKGEIPEVAFMK.

This sequence belongs to the NXF family. As to quaternary structure, heterodimer (via NTF2 domain) with NXT1. The formation of NXF1-NXT1 heterodimers is required for the NXF1-mediated nuclear mRNA export. Forms a complex with RANBP2/NUP358, NXT1 and RANGAP1. Associates with the exon junction complex (EJC). Associates with the transcription/export (TREX) complex. Found in a mRNA complex with UPF3A and UPF3B. Found in a post-splicing complex with RBM8A, UPF1, UPF2, UPF3A, UPF3B and RNPS1. Interacts (via N-terminus) with DHX9 (via N-terminus); this interaction is direct and negatively regulates NXF1-mediated nuclear export of constitutive transport element (CTE)-containing cellular mRNAs. Interacts with FYTTD1/UIF. Interacts with EIF4A3. Interacts with NUP42. Interacts with ALYREF/THOC4. Interacts with CHTOP. Interacts with FRG1 (via N-terminus). Interacts with LUZP4. Interacts with FMR1; the interaction occurs in a mRNA-dependent and polyribosomes-independent manner in the nucleus. Interacts with CPSF6 (via N-terminus); this interaction is direct. Interacts with RBM15. Interacts with RBM15B. Interacts with MCM3AP; this interaction is not mediated by RNA. Interacts with DDX3X (via C-terminus); this interaction may be partly involved in DDX3X nuclear export and in NXF1 localization to stress granules. Interacts with PABPC1/PABP1.

The protein localises to the nucleus. The protein resides in the nucleoplasm. Its subcellular location is the nucleus speckle. It is found in the nuclear pore complex. It localises to the nucleus envelope. The protein localises to the cytoplasm. The protein resides in the stress granule. Functionally, involved in the nuclear export of mRNA species bearing retroviral constitutive transport elements (CTE) and in the export of mRNA from the nucleus to the cytoplasm (TAP/NFX1 pathway). The NXF1-NXT1 heterodimer is involved in the export of HSP70 mRNA in conjunction with ALYREF/THOC4 and THOC5 components of the TREX complex. ALYREF/THOC4-bound mRNA is thought to be transferred to the NXF1-NXT1 heterodimer for export. Also involved in nuclear export of m6A-containing mRNAs: interaction between SRSF3 and YTHDC1 facilitates m6A-containing mRNA-binding to both SRSF3 and NXF1, promoting mRNA nuclear export. The protein is Nuclear RNA export factor 1 (Nxf1) of Rattus norvegicus (Rat).